The chain runs to 430 residues: Trigger factor (430 aa).

A PPIase FKBP-type domain is found at 163 to 248; the sequence is GNIAIIDFKG…IKDIKVKELP (86 aa).

It belongs to the FKBP-type PPIase family. Tig subfamily.

It is found in the cytoplasm. It carries out the reaction [protein]-peptidylproline (omega=180) = [protein]-peptidylproline (omega=0). Functionally, involved in protein export. Acts as a chaperone by maintaining the newly synthesized protein in an open conformation. Functions as a peptidyl-prolyl cis-trans isomerase. This is Trigger factor from Clostridium botulinum (strain ATCC 19397 / Type A).